We begin with the raw amino-acid sequence, 35 residues long: Augerpeptide hheTx5 (35 aa).

In terms of processing, contains 4 disulfide bonds. In terms of tissue distribution, expressed by the venom duct.

The protein resides in the secreted. In Hastula hectica (Sea snail), this protein is Augerpeptide hheTx5.